Here is a 142-residue protein sequence, read N- to C-terminus: AP-2 complex subunit sigma (142 aa).

It belongs to the adaptor complexes small subunit family. Adaptor protein complex 2 (AP-2) is a heterotetramer composed of two large adaptins (alpha-type and beta-type subunits), a medium adaptin (mu-type subunit) and a small adaptin (sigma-type subunit).

The protein resides in the cell membrane. It is found in the membrane. The protein localises to the coated pit. Subunit of the adaptor protein complex 2 (AP-2). Adaptor protein complexes function in protein transport via transport vesicles in different membrane traffic pathways. Adaptor protein complexes are vesicle coat components and appear to be involved in cargo selection and vesicle formation. AP-2 is involved in clathrin-dependent endocytosis in which cargo proteins are incorporated into vesicles surrounded by clathrin (clathrin-coated vesicles, CCVs) which are destined for fusion with the early endosome. The complex binds polyphosphoinositides. In Arabidopsis thaliana (Mouse-ear cress), this protein is AP-2 complex subunit sigma (AP17).